A 368-amino-acid polypeptide reads, in one-letter code: MNDETTPANKNPEKAELRCGWTTGACATAATKAALTALITGEFPDPVGIILPKGEVPYFQLANEGLGEGYAMAGIVKDAGDDPDVTHGATIISTVYPAPPGTGIIFRAGEGVGTVTREGLAIPPGEAAINPVPRRMMTEICEAICAEYGLPADLVITISVPGGEEIAQKTWNPRLGIIGGISILGTTGVVHPFYCSAWIHSIHRGIDVARAAGQKHVLGATGSTSEDAAQALYNLPDFAILDMGDFAGGVLKYLREHPIDRLTIAGGFAKLTKLAQGALDLHSSRSQVDKGFLWQIAERAGAPADMKERILLANTAMEVLELTQSIGIDIAGPIALEARQTALKTLRGAPVEVEIIVTDRKGNILARV.

Belongs to the CbiD family.

The enzyme catalyses Co-precorrin-5B + S-adenosyl-L-methionine = Co-precorrin-6A + S-adenosyl-L-homocysteine. The protein operates within cofactor biosynthesis; adenosylcobalamin biosynthesis; cob(II)yrinate a,c-diamide from sirohydrochlorin (anaerobic route): step 6/10. Functionally, catalyzes the methylation of C-1 in cobalt-precorrin-5B to form cobalt-precorrin-6A. The chain is Cobalt-precorrin-5B C(1)-methyltransferase from Brucella ovis (strain ATCC 25840 / 63/290 / NCTC 10512).